The primary structure comprises 214 residues: Outer-membrane lipoprotein LolB (214 aa).

Positions 1–25 (MNNLKRLTKTIFSCFTLSALLLLAG) are cleaved as a signal peptide. C26 is lipidated: N-palmitoyl cysteine. Residue C26 is the site of S-diacylglycerol cysteine attachment.

This sequence belongs to the LolB family. As to quaternary structure, monomer.

It localises to the cell outer membrane. Its function is as follows. Plays a critical role in the incorporation of lipoproteins in the outer membrane after they are released by the LolA protein. In Shewanella baltica (strain OS155 / ATCC BAA-1091), this protein is Outer-membrane lipoprotein LolB.